The following is a 176-amino-acid chain: Protein MAL2 (176 aa).

The Cytoplasmic portion of the chain corresponds to 1–34 (MSAGGASVPPPPNPAVSFPVPRVTLPAGPDILRT). In terms of domain architecture, MARVEL spans 31–175 (ILRTYSGAFV…SLGLALRRWR (145 aa)). Residues 35–55 (YSGAFVCLEILFGGLVWILVA) form a helical membrane-spanning segment. Topologically, residues 56–66 (SSNVPLPLLQG) are lumenal. Residues 67 to 87 (WVMFVSVTAFFFSLLFLGLFL) form a helical membrane-spanning segment. Topologically, residues 88-102 (SGMVTQIDANWNFLD) are cytoplasmic. A helical transmembrane segment spans residues 103-123 (FAYHFTVFVFYFGAFLLEAAA). The Lumenal segment spans residues 124-149 (TSLHDLHYNITMTGQPLLNDNQYNIN). Asn132 carries N-linked (GlcNAc...) asparagine glycosylation. The chain crosses the membrane as a helical span at residues 150–170 (VAASIFAFMTTACYGCSLGLA). Residues 171 to 176 (LRRWRP) lie on the Cytoplasmic side of the membrane.

The protein belongs to the MAL family. As to quaternary structure, interacts with TPD52L2.

The protein resides in the cell membrane. Its subcellular location is the apical cell membrane. Functionally, member of the machinery of polarized transport. Required for the indirect transcytotic route at the step of the egress of the transcytosing cargo from perinuclear endosomes in order for it to travel to the apical surface via a raft-dependent pathway. This is Protein MAL2 (MAL2) from Pongo abelii (Sumatran orangutan).